A 130-amino-acid chain; its full sequence is MATEQYYGTGRRKNSVARVFLRAGSGKMTVNGRDVTEYFARETDLMVINQPLEATENADKFDVTITVTGGGTTGQAGAVRHGISRALVVFNEDNRSTLRQRGLLTRDARKVERKKVGLRKARRRPQFSKR.

The protein belongs to the universal ribosomal protein uS9 family.

This Hydrogenovibrio crunogenus (strain DSM 25203 / XCL-2) (Thiomicrospira crunogena) protein is Small ribosomal subunit protein uS9.